A 414-amino-acid polypeptide reads, in one-letter code: MIOREX complex component 10 (414 aa).

The transit peptide at M1–Q29 directs the protein to the mitochondrion. The Mitochondrial matrix segment spans residues N30–T373. The chain crosses the membrane as a helical span at residues F374–F394. The Mitochondrial intermembrane segment spans residues Y395 to K414.

This sequence belongs to the RMD1/sif2 family. As to quaternary structure, associates with the mitochondrial ribosome.

Its subcellular location is the mitochondrion inner membrane. Its function is as follows. Component of MIOREX complexes, large expressome-like assemblies of ribosomes with factors involved in all the steps of post-transcriptional gene expression. In Saccharomyces cerevisiae (strain ATCC 204508 / S288c) (Baker's yeast), this protein is MIOREX complex component 10.